A 291-amino-acid chain; its full sequence is Pre-mRNA-splicing factor SPP381 (291 aa).

Disordered stretches follow at residues 1–99 (MSFR…PLPR) and 239–266 (EKEKLDHKKQRSAEKVEKSHNNNRYKIT). 2 stretches are compositionally biased toward polar residues: residues 28–41 (QNVSLTEKSASLSH) and 52–62 (TGKNRTPNDGQ). A compositionally biased stretch (acidic residues) spans 63–91 (ESNESDGSPESDESPESEESSDNSDSSDS). Positions 239–258 (EKEKLDHKKQRSAEKVEKSH) are enriched in basic and acidic residues.

The protein belongs to the SPP381 family. Component of the U4/U6-U5 tri-snRNP complex composed of the U4, U6 and U5 snRNAs and at least PRP3, PRP4, PRP6, PRP8, PRP18, PRP31, PRP38, SNU13, SNU23, SNU66, SNU114, SPP381, SMB1, SMD1, SMD2, SMD3, SMX2, SMX3, LSM2, LSM3, LSM4, LSM5, LSM6, LSM7, LSM8, BRR2 and DIB1. Interacts with PRP38.

It localises to the nucleus. Its function is as follows. Component of the spliceosome and rRNA processing machinery. In association with the spliceosomal U4/U6.U5 tri-snRNP particle, required for splicing of pre-mRNA. This is Pre-mRNA-splicing factor SPP381 (SPP381) from Saccharomyces cerevisiae (strain ATCC 204508 / S288c) (Baker's yeast).